Consider the following 392-residue polypeptide: MIWIMTMARRMNGVYAAFMLVAFMMGVAGALQAPTLSLFLSREVGAQPFWIGLFYTVNAIAGIGVSLWLAKRSDSQGDRRKLIIFCCLMAIGNALLFAFNRHYLTLITCGVLLASLANTAMPQLFALAREYADNSAREVVMFSSVMRAQLSLAWVIGPPLAFMLALNYGFTVMFSIAAGIFTLSLVLIAFMLPSVARVELPSENALSMQGGWQDSNVRMLFVASTLMWTCNTMYIIDMPLWISSELGLPDKLAGFLMGTAAGLEIPAMILAGYYVKRYGKRRMMVIAVAAGVLFYTGLIFFNSRMALMTLQLFNAVFIGIVAGIGMLWFQDLMPGRAGAATTLFTNSISTGVILAGVIQGAIAQSWGHFAVYWVIAVISVVALFLTAKVKDV.

The Cytoplasmic portion of the chain corresponds to 1-10; sequence MIWIMTMARR. The helical transmembrane segment at 11–31 threads the bilayer; sequence MNGVYAAFMLVAFMMGVAGAL. Topologically, residues 32 to 48 are periplasmic; the sequence is QAPTLSLFLSREVGAQP. A helical transmembrane segment spans residues 49–69; it reads FWIGLFYTVNAIAGIGVSLWL. Residues 70–81 are Cytoplasmic-facing; that stretch reads AKRSDSQGDRRK. Residues 82–102 traverse the membrane as a helical segment; that stretch reads LIIFCCLMAIGNALLFAFNRH. Over 103-106 the chain is Periplasmic; it reads YLTL. Residues 107 to 127 form a helical membrane-spanning segment; that stretch reads ITCGVLLASLANTAMPQLFAL. At 128 to 149 the chain is on the cytoplasmic side; sequence AREYADNSAREVVMFSSVMRAQ. The chain crosses the membrane as a helical span at residues 150-170; sequence LSLAWVIGPPLAFMLALNYGF. Residue threonine 171 is a topological domain, periplasmic. Residues 172-192 traverse the membrane as a helical segment; the sequence is VMFSIAAGIFTLSLVLIAFML. The Cytoplasmic segment spans residues 193–219; sequence PSVARVELPSENALSMQGGWQDSNVRM. A helical membrane pass occupies residues 220-240; it reads LFVASTLMWTCNTMYIIDMPL. Residues 241–251 lie on the Periplasmic side of the membrane; the sequence is WISSELGLPDK. A helical membrane pass occupies residues 252 to 272; sequence LAGFLMGTAAGLEIPAMILAG. The Cytoplasmic portion of the chain corresponds to 273 to 282; sequence YYVKRYGKRR. Residues 283–303 form a helical membrane-spanning segment; sequence MMVIAVAAGVLFYTGLIFFNS. At 304 to 308 the chain is on the periplasmic side; it reads RMALM. A helical membrane pass occupies residues 309–329; the sequence is TLQLFNAVFIGIVAGIGMLWF. The Cytoplasmic portion of the chain corresponds to 330 to 342; the sequence is QDLMPGRAGAATT. Residues 343-363 traverse the membrane as a helical segment; sequence LFTNSISTGVILAGVIQGAIA. Topologically, residues 364 to 365 are periplasmic; the sequence is QS. Residues 366-386 form a helical membrane-spanning segment; sequence WGHFAVYWVIAVISVVALFLT. At 387 to 392 the chain is on the cytoplasmic side; that stretch reads AKVKDV.

Belongs to the major facilitator superfamily. Set transporter family.

It localises to the cell inner membrane. In terms of biological role, involved in the efflux of sugars. The physiological role may be the detoxification of non-metabolizable sugar analogs. Can transport IPTG, lactose and glucose. Has broad substrate specificity, with preferences for glucosides or galactosides with alkyl or aryl substituents. In Escherichia coli (strain K12), this protein is Sugar efflux transporter A (setA).